Reading from the N-terminus, the 275-residue chain is Sororin-B (275 aa).

Residues 1–16 (MSERKKRGSSDADSRR) are compositionally biased toward basic and acidic residues. 2 disordered regions span residues 1–42 (MSER…PAPI) and 63–117 (NTGS…EIDV). 2 stretches are compositionally biased toward polar residues: residues 63-76 (NTGS…SNVT) and 93-112 (NAFS…QSSA). The short motif at 91 to 93 (KEN) is the KEN box element. The FGF motif signature appears at 186–188 (FGF). The C-terminal Sororin domain stretch occupies residues 253-275 (VDEWAAIMNAEFDEAEKFDLTVE).

It belongs to the sororin family. Interacts with the APC/C complex. Interacts with the chromatin-bound cohesin complex; the interaction is indirect, occurs after DNA replication and requires acetylation of the cohesin component smc3. Interacts (via the FGF motif) with pds5a and pds5b; the interaction is direct and prevents the interaction of pds5a with wapl. Ubiquitinated by the APC/C complex in G1, leading to its degradation.

The protein localises to the nucleus. Its subcellular location is the chromosome. It localises to the cytoplasm. Its function is as follows. Regulator of sister chromatid cohesion in mitosis stabilizing cohesin complex association with chromatin. May antagonize the action of wapl which stimulates cohesin dissociation from chromatin. Cohesion ensures that chromosome partitioning is accurate in both meiotic and mitotic cells and plays an important role in DNA repair. Required for efficient DNA double-stranded break repair. The polypeptide is Sororin-B (cdca5-b) (Xenopus laevis (African clawed frog)).